Reading from the N-terminus, the 158-residue chain is Lipoprotein signal peptidase (158 aa).

The next 4 helical transmembrane spans lie at 7 to 27, 38 to 58, 67 to 87, and 95 to 115; these read LFWIAAFIAFFVDQLTKYWVV, ILPGIFHFTYVTNTGAAFSLF, WLSLGVSLLLIGLALLGPVLE, and GLILGGAMGNGIDRFALGYVV. Active-site residues include Asp116 and Asp132. A helical transmembrane segment spans residues 125 to 145; it reads FAVFNMADSFISIGIVCLLLA.

This sequence belongs to the peptidase A8 family.

Its subcellular location is the cell inner membrane. The catalysed reaction is Release of signal peptides from bacterial membrane prolipoproteins. Hydrolyzes -Xaa-Yaa-Zaa-|-(S,diacylglyceryl)Cys-, in which Xaa is hydrophobic (preferably Leu), and Yaa (Ala or Ser) and Zaa (Gly or Ala) have small, neutral side chains.. The protein operates within protein modification; lipoprotein biosynthesis (signal peptide cleavage). Functionally, this protein specifically catalyzes the removal of signal peptides from prolipoproteins. The chain is Lipoprotein signal peptidase from Trichormus variabilis (strain ATCC 29413 / PCC 7937) (Anabaena variabilis).